The sequence spans 280 residues: uncharacterized protein (280 aa).

Positions 1–10 (MSSSIKKLKK) are enriched in basic residues. A disordered region spans residues 1–45 (MSSSIKKLKKDTKDTDKTPSKKIYQETHNSEDSEDSEDSDNENNT). The segment covering 11–31 (DTKDTDKTPSKKIYQETHNSE) has biased composition (basic and acidic residues). Over residues 32 to 41 (DSEDSEDSDN) the composition is skewed to acidic residues.

This is an uncharacterized protein from Acanthamoeba polyphaga mimivirus (APMV).